Here is a 442-residue protein sequence, read N- to C-terminus: tRNA-2-methylthio-N(6)-dimethylallyladenosine synthase (442 aa).

In terms of domain architecture, MTTase N-terminal spans 5–122 (KKVFIKTLGC…LPEMIKQKQK (118 aa)). 6 residues coordinate [4Fe-4S] cluster: Cys14, Cys51, Cys85, Cys159, Cys163, and Cys166. A Radical SAM core domain is found at 145–378 (KAEGAKAYVS…DLLNSNAQII (234 aa)). The 63-residue stretch at 380–442 (RQMVGTNQRI…LPNSLRGELI (63 aa)) folds into the TRAM domain.

It belongs to the methylthiotransferase family. MiaB subfamily. As to quaternary structure, monomer. The cofactor is [4Fe-4S] cluster.

The protein localises to the cytoplasm. The enzyme catalyses N(6)-dimethylallyladenosine(37) in tRNA + (sulfur carrier)-SH + AH2 + 2 S-adenosyl-L-methionine = 2-methylsulfanyl-N(6)-dimethylallyladenosine(37) in tRNA + (sulfur carrier)-H + 5'-deoxyadenosine + L-methionine + A + S-adenosyl-L-homocysteine + 2 H(+). In terms of biological role, catalyzes the methylthiolation of N6-(dimethylallyl)adenosine (i(6)A), leading to the formation of 2-methylthio-N6-(dimethylallyl)adenosine (ms(2)i(6)A) at position 37 in tRNAs that read codons beginning with uridine. The protein is tRNA-2-methylthio-N(6)-dimethylallyladenosine synthase of Francisella tularensis subsp. tularensis (strain FSC 198).